The sequence spans 129 residues: Large ribosomal subunit protein bL19 (129 aa).

It belongs to the bacterial ribosomal protein bL19 family.

Its function is as follows. This protein is located at the 30S-50S ribosomal subunit interface and may play a role in the structure and function of the aminoacyl-tRNA binding site. This chain is Large ribosomal subunit protein bL19, found in Bordetella avium (strain 197N).